The chain runs to 445 residues: C4-dicarboxylate transport protein (445 aa).

The next 8 helical transmembrane spans lie at 24–44 (VLYIQVLIAIVLGVLVGWLSP), 62–82 (LIKMVIAPIIFCTVVSGIAHI), 105–125 (FALILGLVVGNLLPVGHGLAA), 163–183 (GDILQVLLFAILFGFALMALG), 201–221 (FGVIAIVMKAAPVGAFGAMAF), 237–257 (LVALFYATAALFVFVVLGVIA), 322–342 (IYMTLATLFIAQALGIELSFS), and 370–390 (AGTLAAVNPALVPGMAIVFSI).

This sequence belongs to the dicarboxylate/amino acid:cation symporter (DAACS) (TC 2.A.23) family.

The protein localises to the cell inner membrane. In terms of biological role, responsible for the transport of dicarboxylates such as succinate, fumarate, and malate from the periplasm across the membrane. The sequence is that of C4-dicarboxylate transport protein from Rhodopseudomonas palustris (strain HaA2).